The chain runs to 217 residues: ATP phosphoribosyltransferase (217 aa).

This sequence belongs to the ATP phosphoribosyltransferase family. Short subfamily. Heteromultimer composed of HisG and HisZ subunits.

The protein resides in the cytoplasm. The catalysed reaction is 1-(5-phospho-beta-D-ribosyl)-ATP + diphosphate = 5-phospho-alpha-D-ribose 1-diphosphate + ATP. It participates in amino-acid biosynthesis; L-histidine biosynthesis; L-histidine from 5-phospho-alpha-D-ribose 1-diphosphate: step 1/9. Catalyzes the condensation of ATP and 5-phosphoribose 1-diphosphate to form N'-(5'-phosphoribosyl)-ATP (PR-ATP). Has a crucial role in the pathway because the rate of histidine biosynthesis seems to be controlled primarily by regulation of HisG enzymatic activity. The chain is ATP phosphoribosyltransferase from Syntrophomonas wolfei subsp. wolfei (strain DSM 2245B / Goettingen).